The following is a 156-amino-acid chain: Aspartate carbamoyltransferase regulatory chain (156 aa).

4 residues coordinate Zn(2+): C109, C114, C138, and C141.

This sequence belongs to the PyrI family. Contains catalytic and regulatory chains. Zn(2+) is required as a cofactor.

In terms of biological role, involved in allosteric regulation of aspartate carbamoyltransferase. The protein is Aspartate carbamoyltransferase regulatory chain of Baumannia cicadellinicola subsp. Homalodisca coagulata.